Reading from the N-terminus, the 328-residue chain is MDIIDTALPDVKLLKPQVFTDGRGFFMETFRDGWFKENIADRTFVQENHSNSSKGVLRGLHYQTENTQGKLVRVVVGEVFDVAVDMREGSPTFGKWAGATLSAQNRYQLWIPEGFAHGFCVLGDAAEVVYKCTDYYNPETEQVLIWNDPAIGIGWPLQTAPLLSPKDLAGKTWAQAEKSALRFPDKKCRPNVSDGIFSDRLPTRLQYALCKEKHPGNEERQAQPRSGGIPVLQIQRERRIRAAVGHREGNNKRHNYTNQAFTDNQACREKRTDTVGVFQTAFAVFRLLANDVFQHRRQHRACHDGHIDGRRQINAHTDRKDGQGKFTA.

Substrate is bound by residues arginine 23, glutamate 28, 46–48, and arginine 58; that span reads QEN. The active-site Proton acceptor is histidine 61. Positions 70 and 117 each coordinate substrate. Residue tyrosine 130 is the Proton donor of the active site. Residues glutamate 141 and lysine 166 each coordinate substrate.

Belongs to the dTDP-4-dehydrorhamnose 3,5-epimerase family. Homodimer.

The enzyme catalyses dTDP-4-dehydro-6-deoxy-alpha-D-glucose = dTDP-4-dehydro-beta-L-rhamnose. It functions in the pathway carbohydrate biosynthesis; dTDP-L-rhamnose biosynthesis. The protein operates within bacterial outer membrane biogenesis; LPS O-antigen biosynthesis. Catalyzes the epimerization of the C3' and C5'positions of dTDP-6-deoxy-D-xylo-4-hexulose, forming dTDP-6-deoxy-L-lyxo-4-hexulose. In Neisseria gonorrhoeae, this protein is dTDP-4-dehydrorhamnose 3,5-epimerase (rfbC).